Here is a 765-residue protein sequence, read N- to C-terminus: Endothelin-converting enzyme 2 (765 aa).

At Met-1–Glu-60 the chain is on the cytoplasmic side. The helical; Signal-anchor for type II membrane protein transmembrane segment at Leu-61–Leu-81 threads the bilayer. Residues Gly-82–Trp-765 lie on the Lumenal side of the membrane. The 673-residue stretch at Thr-93 to Trp-765 folds into the Peptidase M13 domain. Disulfide bonds link Cys-94/Cys-99, Cys-117/Cys-750, Cys-125/Cys-710, Cys-181/Cys-430, and Cys-639/Cys-762. 7 N-linked (GlcNAc...) asparagine glycosylation sites follow: Asn-161, Asn-165, Asn-206, Asn-266, Asn-311, Asn-378, and Asn-534. His-602 serves as a coordination point for Zn(2+). Glu-603 is a catalytic residue. His-606 serves as a coordination point for Zn(2+). Residues Asn-627 and Asn-635 are each glycosylated (N-linked (GlcNAc...) asparagine). Glu-662 provides a ligand contact to Zn(2+). The active-site Proton donor is Asp-666.

This sequence belongs to the peptidase M13 family. Zn(2+) is required as a cofactor. As to expression, isoform ECE2-1 and isoform ECE2-2 are expressed in brain and adrenal gland.

It localises to the golgi apparatus membrane. It is found in the cytoplasmic vesicle. The protein localises to the secretory vesicle membrane. The catalysed reaction is Hydrolysis of the 21-Trp-|-Val-22 bond in big endothelin to form endothelin 1.. Converts big endothelin-1 to endothelin-1. Also involved in the processing of various neuroendocrine peptides, including neurotensin, angiotensin I, substance P, proenkephalin-derived peptides, and prodynorphin-derived peptides. May play a role in amyloid-beta processing. This is Endothelin-converting enzyme 2 from Bos taurus (Bovine).